We begin with the raw amino-acid sequence, 330 residues long: Diacylglycerol acyltransferase/mycolyltransferase Ag85B (330 aa).

Positions 1–40 are cleaved as a signal peptide; that stretch reads MTDLSEKVRAWGRRLLVGAAAAVTLPGLIGLAGGAATANA. 82–83 serves as a coordination point for substrate; sequence LR. The tract at residues 98–108 is fibronectin-binding; the sequence is FEWYYQSGLSV. Residues cysteine 127 and cysteine 132 are joined by a disulfide bond. Substrate is bound by residues serine 166 and aspartate 194. Serine 166 functions as the Nucleophile in the catalytic mechanism. The active site involves glutamate 270. Residues 272–275, lysine 279, and 302–304 each bind substrate; these read FVRS and HSW. Histidine 302 is an active-site residue.

This sequence belongs to the mycobacterial A85 antigen family.

It localises to the secreted. The catalysed reaction is 2 alpha,alpha'-trehalose 6-mycolate = alpha,alpha'-trehalose 6,6'-bismycolate + alpha,alpha-trehalose. It catalyses the reaction an acyl-CoA + a 1,2-diacyl-sn-glycerol = a triacyl-sn-glycerol + CoA. In terms of biological role, the antigen 85 proteins (FbpA, FbpB, FbpC) are responsible for the high affinity of mycobacteria for fibronectin, a large adhesive glycoprotein, which facilitates the attachment of M.tuberculosis to murine alveolar macrophages (AMs). They also help to maintain the integrity of the cell wall by catalyzing the transfer of mycolic acids to cell wall arabinogalactan and through the synthesis of alpha,alpha-trehalose dimycolate (TDM, cord factor). They catalyze the transfer of a mycoloyl residue from one molecule of alpha,alpha-trehalose monomycolate (TMM) to another TMM, leading to the formation of TDM. The sequence is that of Diacylglycerol acyltransferase/mycolyltransferase Ag85B (fbpB) from Mycobacterium avium.